The primary structure comprises 142 residues: MATKSTGGTEKTKSIEVKKKLINVLIVDDDPLNRRLHEMIIKTIGGISQTAKNGEEAVILHRDGEASFDLILMDKEMPERDGVSTTKKLREMKVTSMIVGVTSVADQEEERKAFMEAGLNHCLEKPLTKAKIFPLISHLFDA.

Positions Asn23–Phe140 constitute a Response regulatory domain. Asp74 bears the 4-aspartylphosphate mark.

Belongs to the ARR family. Type-A subfamily. Two-component system major event consists of a His-to-Asp phosphorelay between a sensor histidine kinase (HK) and a response regulator (RR). In plants, the His-to-Asp phosphorelay involves an additional intermediate named Histidine-containing phosphotransfer protein (HPt). This multistep phosphorelay consists of a His-Asp-His-Asp sequential transfer of a phosphate group between first a His and an Asp of the HK protein, followed by the transfer to a conserved His of the HPt protein and finally the transfer to an Asp in the receiver domain of the RR protein.

It is found in the nucleus. In terms of biological role, functions as a response regulator involved in His-to-Asp phosphorelay signal transduction system. Phosphorylation of the Asp residue in the receiver domain activates the ability of the protein to promote the transcription of target genes. Type-A response regulators seem to act as negative regulators of the cytokinin signaling. The sequence is that of Two-component response regulator ARR22 (ARR22) from Arabidopsis thaliana (Mouse-ear cress).